The primary structure comprises 284 residues: uncharacterized protein (284 aa).

Residues 1 to 10 show a composition bias toward polar residues; that stretch reads MSNSVTNFEM. The tract at residues 1–28 is disordered; the sequence is MSNSVTNFEMSSVLPGKKPCQGKNNESQ.

This is an uncharacterized protein from Escherichia coli (strain K12).